The primary structure comprises 124 residues: Small ribosomal subunit protein uS12 (124 aa).

A disordered region spans residues 1-25 (MPTINQLIRKPRKSQKEKTASPALQ). Position 89 is a 3-methylthioaspartic acid (aspartate 89).

Belongs to the universal ribosomal protein uS12 family. In terms of assembly, part of the 30S ribosomal subunit. Contacts proteins S8 and S17. May interact with IF1 in the 30S initiation complex.

In terms of biological role, with S4 and S5 plays an important role in translational accuracy. Interacts with and stabilizes bases of the 16S rRNA that are involved in tRNA selection in the A site and with the mRNA backbone. Located at the interface of the 30S and 50S subunits, it traverses the body of the 30S subunit contacting proteins on the other side and probably holding the rRNA structure together. The combined cluster of proteins S8, S12 and S17 appears to hold together the shoulder and platform of the 30S subunit. The chain is Small ribosomal subunit protein uS12 from Borrelia turicatae (strain 91E135).